We begin with the raw amino-acid sequence, 485 residues long: Aspartyl/glutamyl-tRNA(Asn/Gln) amidotransferase subunit B (485 aa).

The protein belongs to the GatB/GatE family. GatB subfamily. As to quaternary structure, heterotrimer of A, B and C subunits.

It catalyses the reaction L-glutamyl-tRNA(Gln) + L-glutamine + ATP + H2O = L-glutaminyl-tRNA(Gln) + L-glutamate + ADP + phosphate + H(+). It carries out the reaction L-aspartyl-tRNA(Asn) + L-glutamine + ATP + H2O = L-asparaginyl-tRNA(Asn) + L-glutamate + ADP + phosphate + 2 H(+). Its function is as follows. Allows the formation of correctly charged Asn-tRNA(Asn) or Gln-tRNA(Gln) through the transamidation of misacylated Asp-tRNA(Asn) or Glu-tRNA(Gln) in organisms which lack either or both of asparaginyl-tRNA or glutaminyl-tRNA synthetases. The reaction takes place in the presence of glutamine and ATP through an activated phospho-Asp-tRNA(Asn) or phospho-Glu-tRNA(Gln). The protein is Aspartyl/glutamyl-tRNA(Asn/Gln) amidotransferase subunit B of Paramagnetospirillum magneticum (strain ATCC 700264 / AMB-1) (Magnetospirillum magneticum).